Consider the following 354-residue polypeptide: DNA polymerase IV (354 aa).

The UmuC domain maps to 6-187; it reads IIHIDCDCFY…LPVTKLHGVG (182 aa). 2 residues coordinate Mg(2+): Asp-10 and Asp-105. Glu-106 is a catalytic residue.

The protein belongs to the DNA polymerase type-Y family. As to quaternary structure, monomer. The cofactor is Mg(2+).

The protein resides in the cytoplasm. It carries out the reaction DNA(n) + a 2'-deoxyribonucleoside 5'-triphosphate = DNA(n+1) + diphosphate. In terms of biological role, poorly processive, error-prone DNA polymerase involved in untargeted mutagenesis. Copies undamaged DNA at stalled replication forks, which arise in vivo from mismatched or misaligned primer ends. These misaligned primers can be extended by PolIV. Exhibits no 3'-5' exonuclease (proofreading) activity. May be involved in translesional synthesis, in conjunction with the beta clamp from PolIII. The protein is DNA polymerase IV of Pseudomonas syringae pv. syringae (strain B728a).